Reading from the N-terminus, the 401-residue chain is MSLRQLLLRLSGYLGASGPPSRHWWYFRSLDSISSAGSWRGRSSRSPAHWNQVVSEAEKIVGYPASFMSLRCLLSDELSNIAMQVRKLVGTGHPLLTTARALVHDSRHNLQLRGLVVLLISKAAGPSTRNAACQNYDMVSGVYSCQRSLAEITELIHTALLVHRGIVNLSELQSSDGPLKDMQFGNKIAILSGDFLLANACNGLALLQNTKVVELLSSALMDLVHGVYQENSASTKENSIPDDIGISTWKEQTFLSHCALLAKSCQAAMELAKHDAAVQDMAFQYGKHMAMSHKINADLQPFIKDKASDSKTFNLNSAPVVLHQEFLGRDLWIKQIGEAQEKGSLNYSKLRETIKAGKGVTSAIDLCRYHGNKALEALESFPPSEARSALENIVFAVTRFS.

This sequence belongs to the FPP/GGPP synthase family. In terms of assembly, heterotetramer composed of 2 PDSS1/DPS1 and 2 PDSS2/DLP1 subunits.

Its subcellular location is the mitochondrion. The catalysed reaction is 7 isopentenyl diphosphate + (2E,6E)-farnesyl diphosphate = all-trans-decaprenyl diphosphate + 7 diphosphate. It catalyses the reaction 6 isopentenyl diphosphate + (2E,6E)-farnesyl diphosphate = all-trans-nonaprenyl diphosphate + 6 diphosphate. The protein operates within cofactor biosynthesis; ubiquinone biosynthesis. Its function is as follows. Heterotetrameric enzyme that catalyzes the condensation of farnesyl diphosphate (FPP), which acts as a primer, and isopentenyl diphosphate (IPP) to produce prenyl diphosphates of varying chain lengths and participates in the determination of the side chain of ubiquinone. Supplies nona and decaprenyl diphosphate, the precursors for the side chain of the isoprenoid quinones ubiquinone-9 (Q9) and ubiquinone-10 (Q10) respectively. The enzyme adds isopentenyl diphosphate molecules sequentially to farnesyl diphosphate with trans stereochemistry. May play a role during cerebellar development. May regulate mitochondrial respiratory chain function. The sequence is that of All trans-polyprenyl-diphosphate synthase PDSS2 from Mus musculus (Mouse).